The primary structure comprises 505 residues: Serine/threonine-protein kinase D (505 aa).

The Protein kinase domain maps to 9-271 (YEIVKSLGSG…AMYQALHSLI (263 aa)). ATP-binding positions include 15–23 (LGSGGFGDT) and lysine 40. Aspartate 136 (proton acceptor) is an active-site residue. The 70-residue stretch at 436–505 (GASATIGGIP…GWIASQLVNF (70 aa)) folds into the SH3b domain.

Belongs to the protein kinase superfamily. Ser/Thr protein kinase family.

It catalyses the reaction L-seryl-[protein] + ATP = O-phospho-L-seryl-[protein] + ADP + H(+). The catalysed reaction is L-threonyl-[protein] + ATP = O-phospho-L-threonyl-[protein] + ADP + H(+). In Synechocystis sp. (strain ATCC 27184 / PCC 6803 / Kazusa), this protein is Serine/threonine-protein kinase D (spkD).